A 274-amino-acid chain; its full sequence is Thiamine kinase (274 aa).

The protein belongs to the thiamine kinase family.

The catalysed reaction is thiamine + ATP = thiamine phosphate + ADP + H(+). It functions in the pathway cofactor biosynthesis; thiamine diphosphate biosynthesis; thiamine phosphate from thiamine: step 1/1. Functionally, catalyzes the ATP-dependent phosphorylation of thiamine to thiamine phosphate. Is involved in thiamine salvage. The chain is Thiamine kinase from Salmonella typhimurium (strain LT2 / SGSC1412 / ATCC 700720).